The primary structure comprises 352 residues: AP2/ERF and B3 domain-containing transcription factor At1g51120 (352 aa).

The tract at residues 1–20 (MDEMSNVAKTTTETSGLTDS) is disordered. The span at 7-20 (VAKTTTETSGLTDS) shows a compositional bias: polar residues. Residues 46 to 103 (KFKGVVQQQNGHWGAQIYADHRRIWLGTFKSAHEAAAAYDSASIKLRSFDANSHRNFP) constitute a DNA-binding region (AP2/ERF). The TF-B3 DNA-binding region spans 178–297 (FQKELTPSDV…KTFLMIDVHH (120 aa)).

The protein belongs to the AP2/ERF transcription factor family. RAV subfamily.

It is found in the nucleus. Its function is as follows. Probably acts as a transcriptional activator. Binds to the GCC-box pathogenesis-related promoter element. May be involved in the regulation of gene expression by stress factors and by components of stress signal transduction pathways. This Arabidopsis thaliana (Mouse-ear cress) protein is AP2/ERF and B3 domain-containing transcription factor At1g51120.